Here is a 434-residue protein sequence, read N- to C-terminus: UDP-N-acetylmuramate--L-alanine ligase (434 aa).

108–114 (GSHGKTT) lines the ATP pocket.

Belongs to the MurCDEF family.

It localises to the cytoplasm. The catalysed reaction is UDP-N-acetyl-alpha-D-muramate + L-alanine + ATP = UDP-N-acetyl-alpha-D-muramoyl-L-alanine + ADP + phosphate + H(+). It participates in cell wall biogenesis; peptidoglycan biosynthesis. Its function is as follows. Cell wall formation. The chain is UDP-N-acetylmuramate--L-alanine ligase from Geobacillus kaustophilus (strain HTA426).